Consider the following 473-residue polypeptide: H(+)/Cl(-) exchange transporter ClcA (473 aa).

Over 1 to 32 (MKTDTSTFLAQQIVRLRRRDQIRRLMQRDKTP) the chain is Cytoplasmic. Residues 33-69 (LAILFMAAVVGTLTGLVGVAFEKAVSWVQNMRIGALV) form a helical membrane-spanning segment. Residues 70 to 76 (QVADHAF) lie on the Periplasmic side of the membrane. The chain crosses the membrane as a helical span at residues 77–100 (LLWPLAFILSALLAMVGYFLVRKF). A Selectivity filter part_1 motif is present at residues 106 to 110 (GSGIP). Position 107 (Ser-107) interacts with chloride. The segment at residues 109–116 (IPEIEGAL) is an intramembrane region (helical). Residues 117–123 (EELRPVR) are Cytoplasmic-facing. Helical transmembrane passes span 124–141 (WWRV…TLGA) and 148–166 (EGPT…LDVF). A Selectivity filter part_2 motif is present at residues 146 to 150 (GREGP). Topologically, residues 167–176 (RMRSAEARHT) are cytoplasmic. Intramembrane regions (helical) lie at residues 177 to 189 (LLAT…LSAA) and 193 to 201 (PLAGILFII). The Cytoplasmic portion of the chain corresponds to 202–214 (EEMRPQFRYNLIS). A helical membrane pass occupies residues 215–232 (IKAVFTGVIMSSIVFRIF). Over 233-252 (NGEAPIIEVGKLSDAPVNTL) the chain is Periplasmic. The helical transmembrane segment at 253-281 (WLYLILGIIFGCVGPVFNSLVLRTQDMFQ) threads the bilayer. The Cytoplasmic portion of the chain corresponds to 282–287 (RFHGGE). A helical transmembrane segment spans residues 288–309 (IKKWVLMGGAIGGLCGILGLIE). The Periplasmic portion of the chain corresponds to 310-329 (PEAAGGGFNLIPIAAAGNFS). Transmembrane regions (helical) follow at residues 330–349 (VGLL…LCFS) and 355–376 (GIFA…MAAA). Residues 355 to 359 (GIFAP) carry the Selectivity filter part_3 motif. 2 residues coordinate chloride: Ile-356 and Phe-357. Topologically, residues 377-386 (VLFPQYHLEA) are periplasmic. The helical intramembrane region spans 387–401 (GTFAIAGMGALMAAS). Residues 402–404 (VRA) constitute an intramembrane region (note=Loop between two helices). Positions 405–416 (PLTGIVLVLEMT) form an intramembrane region, helical. Residues 417–421 (DNYQL) constitute an intramembrane region (note=Loop between two helices). The chain crosses the membrane as a helical span at residues 422–438 (ILPMIITCLGATLLAQF). Residues 439-473 (LGGKPLYSTILARTLAKQDAEQAAKSQNAPAGENT) are Cytoplasmic-facing. Tyr-445 contributes to the chloride binding site.

The protein belongs to the chloride channel (TC 2.A.49) family. ClcA subfamily. In terms of assembly, homodimer.

The protein resides in the cell inner membrane. It carries out the reaction 2 chloride(in) + H(+)(out) = 2 chloride(out) + H(+)(in). In terms of biological role, proton-coupled chloride transporter. Functions as antiport system and exchanges two chloride ions for 1 proton. Probably acts as an electrical shunt for an outwardly-directed proton pump that is linked to amino acid decarboxylation, as part of the extreme acid resistance (XAR) response. The polypeptide is H(+)/Cl(-) exchange transporter ClcA (Salmonella gallinarum (strain 287/91 / NCTC 13346)).